The sequence spans 1155 residues: Cilia- and flagella-associated protein 251 (1155 aa).

2 stretches are compositionally biased toward basic and acidic residues: residues 1–19 and 31–59; these read MSDAEEAPREATRENGETE and KEVEDPQQESKDDTLAWRESQEEERKTGE. Disordered regions lie at residues 1-144 and 167-225; these read MSDA…KLSL and LDQI…DIQS. A compositionally biased stretch (acidic residues) spans 60-69; the sequence is EEGEEEEEKE. Residues 70–95 show a composition bias toward basic and acidic residues; sequence EEGKKDKKIVMEETEEKAGESQEKEA. Over residues 99 to 111 the composition is skewed to low complexity; that stretch reads QEETTVEPQEVTE. Composition is skewed to polar residues over residues 118–128 and 172–182; these read TQITDSQSVTS and PEEQQISSPER. Basic and acidic residues predominate over residues 201–220; that stretch reads GQERRDLEPENREEGQERTV. WD repeat units follow at residues 341–383, 391–431, 442–481, 499–534, 537–597, 601–641, 647–684, 694–730, 737–780, 791–831, 837–883, 889–927, 965–1005, and 1025–1065; these read PVHT…IWKW, ACTL…AWYE, LLTEKTFNKLVGKFSQSVFHLNLTQILSATMEGKLVVWDI, PCKLVHLQKEGITVLTTTDSYIVTGDIKGNIKFYDH, SIVN…VYHL, GTKL…VWNY, LFSRVFEKGLGVQSLTYNPEGALLGAGFTEGTVYILDA, PFKYSRTSVTHISFSHDSQYMATADRSFTVAVYMLVV, WEYL…GYDL, LDIH…LFNA, RKTL…ILPV, KTSAIVCHPNGVAGMAVSYDGHYAFTAGGHDRSVVQWKI, YFYY…FYPS, and GKLI…GYTN.

It is found in the cytoplasm. The protein localises to the cytoskeleton. The protein resides in the cilium axoneme. Its subcellular location is the cell projection. It localises to the cilium. It is found in the flagellum. Functionally, involved in spermatozoa motility. May also regulate cilium motility through its role in the assembly of the axonemal radial spokes. This is Cilia- and flagella-associated protein 251 from Pongo abelii (Sumatran orangutan).